A 174-amino-acid polypeptide reads, in one-letter code: MDYYRVGTLVNTHGIRGEVKVVVVTDFPEERFKVGQQLSLFKTPDETTGGITVKIAKAREQKGLYFLTFEGLDNINDVERYKGWTIKVPAEALHALPAGEYYYHQIVGLQVVTTADEPLGTIKEILSPGANDVWVVKRDHGQSDVLLPKIPQVIKDVDLDAGVVTVELMEGLID.

Positions 98-172 (AGEYYYHQIV…VVTVELMEGL (75 aa)) constitute a PRC barrel domain.

This sequence belongs to the RimM family. Binds ribosomal protein uS19.

The protein localises to the cytoplasm. An accessory protein needed during the final step in the assembly of 30S ribosomal subunit, possibly for assembly of the head region. Essential for efficient processing of 16S rRNA. May be needed both before and after RbfA during the maturation of 16S rRNA. It has affinity for free ribosomal 30S subunits but not for 70S ribosomes. This chain is Ribosome maturation factor RimM, found in Lactiplantibacillus plantarum (strain ATCC BAA-793 / NCIMB 8826 / WCFS1) (Lactobacillus plantarum).